Here is a 678-residue protein sequence, read N- to C-terminus: RxLR effector protein PITG_16705 (678 aa).

The signal sequence occupies residues 1–20; that stretch reads MHLFFLTAVAFVITSVSVDA. A RxLR-dEER motif is present at residues 46–61; the sequence is RLLRKNSTVDLVGEER.

Belongs to the RxLR effector family.

Its subcellular location is the secreted. The protein resides in the host cytoplasm. In terms of biological role, effector that enhances P.infestans colonization of Nicotiana benthamiana leaves. In Phytophthora infestans (strain T30-4) (Potato late blight agent), this protein is RxLR effector protein PITG_16705.